Consider the following 555-residue polypeptide: Natural resistance-associated macrophage protein 1 (555 aa).

At 1–63 (MSGSGPAMAS…STPGFSFRKL (63 aa)) the chain is on the cytoplasmic side. Residues 64 to 81 (WAFTGPGFLMSIAYLDPG) form a helical membrane-spanning segment. The Extracellular portion of the chain corresponds to 82 to 90 (NVESDLQCG). Residues 91 to 110 (AVAGFKLLWVLLWATVLGLL) form a helical membrane-spanning segment. At 111–147 (CQRLAIRLGVVTGKDLAEICYLYYPRVPRVLLWLMME) the chain is on the cytoplasmic side. Residues 148–168 (IAIIGSDMQEVIGTAIAFSLL) traverse the membrane as a helical segment. At 169-172 (SAGR) the chain is on the extracellular side. The helical transmembrane segment at 173 to 192 (IPLWGGVLITITDTLFFLFL) threads the bilayer. Residues 193 to 201 (DKYGLRKLE) lie on the Cytoplasmic side of the membrane. A helical membrane pass occupies residues 202–222 (AFFGFLITIMALTFGYEYVMV). Topologically, residues 223–245 (RPAQTEVLKGIFLPYCPGCGREE) are extracellular. Residues 246-264 (LLQAVGIVGAIIMPHNIFL) form a helical membrane-spanning segment. Over 265–292 (HSSLVKTRAIDRSKKEEVKEANMYFLTE) the chain is Cytoplasmic. A helical membrane pass occupies residues 293-312 (SCLALFVSFLINLFVMAVFG). The Extracellular portion of the chain corresponds to 313-354 (EAFYHQRNEDVHNKCVNSSVSRYASIFPINNETVSVDIYQGG). N-linked (GlcNAc...) asparagine glycosylation is found at N329 and N343. A helical membrane pass occupies residues 355–374 (VILGCYFGAAALYIWAVGIL). Residues 375–405 (AAGQSSTMTGTYAGQFVMEGFLQLRWSRFTR) lie on the Cytoplasmic side of the membrane. A helical transmembrane segment spans residues 406 to 423 (VLFTRSLAILPTLFVAAF). Topologically, residues 424–434 (RDVSQLTGMND) are extracellular. A helical membrane pass occupies residues 435–455 (LLNVLQSILLPFAVLPVLTFT). The Cytoplasmic segment spans residues 456-471 (SLRPLMHDFANGLLGQ). The helical transmembrane segment at 472–493 (VLMSLITGLVCAINVYFVVDFL) threads the bilayer. Residues 494–501 (PTLRGLGY) are Extracellular-facing. A helical membrane pass occupies residues 502–521 (LIPLGLLLVAYVAFVTYLLW). At 522–555 (TCSIAHGARFLARGRYNRFSFDVTADVPGLAGPH) the chain is on the cytoplasmic side.

This sequence belongs to the NRAMP family. As to expression, macrophages; spleen and thymus and at lower level in liver and lung.

The protein resides in the late endosome membrane. The protein localises to the lysosome membrane. The enzyme catalyses Zn(2+)(in) + H(+)(out) = Zn(2+)(out) + H(+)(in). The catalysed reaction is Fe(2+)(in) + H(+)(out) = Fe(2+)(out) + H(+)(in). It catalyses the reaction Mn(2+)(in) + H(+)(out) = Mn(2+)(out) + H(+)(in). In terms of biological role, macrophage-specific antiporter that fluxes metal ions in either direction against a proton gradient. Localized to late endosomal lysosomal membranes, delivers bivalent cations from the cytosol into these acidic compartments where they may directly affect antimicrobial activity. Involved in iron metabolism and host natural resistance to infection with intracellular parasites. Pathogen resistance involves sequestration of Fe(2+) and Mn(2+), cofactors of both prokaryotic and eukaryotic catalases and superoxide dismutases, not only to protect the macrophage against its own generation of reactive oxygen species, but to deny the cations to the pathogen for synthesis of its protective enzymes. This Gallus gallus (Chicken) protein is Natural resistance-associated macrophage protein 1 (SLC11A1).